We begin with the raw amino-acid sequence, 104 residues long: Large ribosomal subunit protein uL24 (104 aa).

The protein belongs to the universal ribosomal protein uL24 family. In terms of assembly, part of the 50S ribosomal subunit.

Its function is as follows. One of two assembly initiator proteins, it binds directly to the 5'-end of the 23S rRNA, where it nucleates assembly of the 50S subunit. In terms of biological role, one of the proteins that surrounds the polypeptide exit tunnel on the outside of the subunit. The polypeptide is Large ribosomal subunit protein uL24 (Enterobacter sp. (strain 638)).